The chain runs to 314 residues: Polyadenylate-binding protein-interacting protein 8 (314 aa).

The disordered stretch occupies residues 1 to 47 (MAAITEMATDSNDVINDGGTGDGIEKSTDSKPEIESDDLKPKSKPEY). Over residues 23–47 (GIEKSTDSKPEIESDDLKPKSKPEY) the composition is skewed to basic and acidic residues. The PAM2-like signature appears at 59 to 69 (KLNPEAKEFFP). A Bipartite nuclear localization signal motif is present at residues 99 to 112 (RRRRNNYNQGRRVR). 2 consecutive RRM domains span residues 128 to 203 (RTVY…PSKT) and 225 to 301 (RTIY…PSKT).

Interacts with MPC. As to expression, expressed in cauline leaves, stems, rosette leaves, immature siliques and primary inflorescences but at a low level.

It localises to the nucleus. The sequence is that of Polyadenylate-binding protein-interacting protein 8 (CID8) from Arabidopsis thaliana (Mouse-ear cress).